The chain runs to 216 residues: ATP phosphoribosyltransferase (216 aa).

This sequence belongs to the ATP phosphoribosyltransferase family. Short subfamily. In terms of assembly, heteromultimer composed of HisG and HisZ subunits.

Its subcellular location is the cytoplasm. It catalyses the reaction 1-(5-phospho-beta-D-ribosyl)-ATP + diphosphate = 5-phospho-alpha-D-ribose 1-diphosphate + ATP. It functions in the pathway amino-acid biosynthesis; L-histidine biosynthesis; L-histidine from 5-phospho-alpha-D-ribose 1-diphosphate: step 1/9. In terms of biological role, catalyzes the condensation of ATP and 5-phosphoribose 1-diphosphate to form N'-(5'-phosphoribosyl)-ATP (PR-ATP). Has a crucial role in the pathway because the rate of histidine biosynthesis seems to be controlled primarily by regulation of HisG enzymatic activity. The protein is ATP phosphoribosyltransferase of Lachnospira eligens (strain ATCC 27750 / DSM 3376 / VPI C15-48 / C15-B4) (Eubacterium eligens).